The following is a 274-amino-acid chain: NH(3)-dependent NAD(+) synthetase (274 aa).

An ATP-binding site is contributed by 46 to 53; the sequence is GISGGQDS. Asp-52 serves as a coordination point for Mg(2+). Position 140 (Arg-140) interacts with deamido-NAD(+). Residue Thr-160 participates in ATP binding. Glu-165 contacts Mg(2+). Deamido-NAD(+) contacts are provided by Lys-173 and Asp-180. 2 residues coordinate ATP: Lys-189 and Thr-211. Deamido-NAD(+) is bound at residue 260–261; the sequence is HK.

The protein belongs to the NAD synthetase family. Homodimer.

It catalyses the reaction deamido-NAD(+) + NH4(+) + ATP = AMP + diphosphate + NAD(+) + H(+). The protein operates within cofactor biosynthesis; NAD(+) biosynthesis; NAD(+) from deamido-NAD(+) (ammonia route): step 1/1. Its function is as follows. Catalyzes the ATP-dependent amidation of deamido-NAD to form NAD. Uses ammonia as a nitrogen source. The sequence is that of NH(3)-dependent NAD(+) synthetase from Streptococcus gordonii (strain Challis / ATCC 35105 / BCRC 15272 / CH1 / DL1 / V288).